Consider the following 527-residue polypeptide: UDP-glucuronosyltransferase 2A3 (527 aa).

An N-terminal signal peptide occupies residues 1-23 (MRSDKSALVFLLLQLFCVGCGFC). Residues 24–491 (GKVLVWPCDM…TWFQHYSIDV (468 aa)) are Extracellular-facing. An N-linked (GlcNAc...) asparagine glycan is attached at asparagine 313. The helical transmembrane segment at 492–512 (IGFLLACVATAIFLFTKCFLF) threads the bilayer. Residues 513–527 (SCQKFNKTRKIEKRE) are Cytoplasmic-facing.

The protein belongs to the UDP-glycosyltransferase family.

Its subcellular location is the membrane. It catalyses the reaction glucuronate acceptor + UDP-alpha-D-glucuronate = acceptor beta-D-glucuronoside + UDP + H(+). Its function is as follows. UDP-glucuronosyltransferases catalyze phase II biotransformation reactions in which lipophilic substrates are conjugated with glucuronic acid to increase water solubility and enhance excretion. They are of major importance in the conjugation and subsequent elimination of potentially toxic xenobiotics and endogenous compounds. The chain is UDP-glucuronosyltransferase 2A3 (UGT2A3) from Homo sapiens (Human).